Reading from the N-terminus, the 373-residue chain is 3-isopropylmalate dehydrogenase (373 aa).

Residue Gly-82–Glu-93 participates in NAD(+) binding. 4 residues coordinate substrate: Arg-100, Arg-110, Arg-139, and Asp-231. Residues Asp-231, Asp-256, and Asp-260 each coordinate Mg(2+). Gly-295 to Asn-306 contributes to the NAD(+) binding site.

The protein belongs to the isocitrate and isopropylmalate dehydrogenases family. In terms of assembly, homodimer. Requires Mg(2+) as cofactor. Mn(2+) serves as cofactor.

It is found in the cytoplasm. It carries out the reaction (2R,3S)-3-isopropylmalate + NAD(+) = 4-methyl-2-oxopentanoate + CO2 + NADH. It functions in the pathway amino-acid biosynthesis; L-leucine biosynthesis; L-leucine from 3-methyl-2-oxobutanoate: step 3/4. Functionally, catalyzes the oxidation of 3-carboxy-2-hydroxy-4-methylpentanoate (3-isopropylmalate) to 3-carboxy-4-methyl-2-oxopentanoate. The product decarboxylates to 4-methyl-2 oxopentanoate. In Candida maltosa (Yeast), this protein is 3-isopropylmalate dehydrogenase (LEU2).